Consider the following 418-residue polypeptide: Tyrosine--tRNA ligase (418 aa).

L-tyrosine is bound at residue tyrosine 34. A 'HIGH' region motif is present at residues 39–48 (PTADSLHLGH). 2 residues coordinate L-tyrosine: tyrosine 169 and glutamine 173. The 'KMSKS' region motif lies at 229-233 (KFGKS). Lysine 232 contacts ATP. Positions 352 to 418 (LNLVDMLVTA…GKKKYAVLTY (67 aa)) constitute an S4 RNA-binding domain.

It belongs to the class-I aminoacyl-tRNA synthetase family. TyrS type 1 subfamily. As to quaternary structure, homodimer.

The protein localises to the cytoplasm. It catalyses the reaction tRNA(Tyr) + L-tyrosine + ATP = L-tyrosyl-tRNA(Tyr) + AMP + diphosphate + H(+). Its function is as follows. Catalyzes the attachment of tyrosine to tRNA(Tyr) in a two-step reaction: tyrosine is first activated by ATP to form Tyr-AMP and then transferred to the acceptor end of tRNA(Tyr). The protein is Tyrosine--tRNA ligase of Streptococcus pyogenes serotype M28 (strain MGAS6180).